The chain runs to 124 residues: Small ribosomal subunit protein uS13 (124 aa).

Residues 103–117 (KCNARTRKGPRKTVA) show a composition bias toward basic residues. Residues 103–124 (KCNARTRKGPRKTVANKKIETK) are disordered.

It belongs to the universal ribosomal protein uS13 family. As to quaternary structure, part of the 30S ribosomal subunit. Forms a loose heterodimer with protein S19. Forms two bridges to the 50S subunit in the 70S ribosome.

Its function is as follows. Located at the top of the head of the 30S subunit, it contacts several helices of the 16S rRNA. In the 70S ribosome it contacts the 23S rRNA (bridge B1a) and protein L5 of the 50S subunit (bridge B1b), connecting the 2 subunits; these bridges are implicated in subunit movement. Contacts the tRNAs in the A and P-sites. The protein is Small ribosomal subunit protein uS13 of Malacoplasma penetrans (strain HF-2) (Mycoplasma penetrans).